Consider the following 407-residue polypeptide: Arginine biosynthesis bifunctional protein ArgJ (407 aa).

Threonine 157, lysine 183, threonine 194, glutamate 280, asparagine 402, and threonine 407 together coordinate substrate. Threonine 194 serves as the catalytic Nucleophile.

This sequence belongs to the ArgJ family. As to quaternary structure, heterotetramer of two alpha and two beta chains.

The protein resides in the cytoplasm. The catalysed reaction is N(2)-acetyl-L-ornithine + L-glutamate = N-acetyl-L-glutamate + L-ornithine. It catalyses the reaction L-glutamate + acetyl-CoA = N-acetyl-L-glutamate + CoA + H(+). Its pathway is amino-acid biosynthesis; L-arginine biosynthesis; L-ornithine and N-acetyl-L-glutamate from L-glutamate and N(2)-acetyl-L-ornithine (cyclic): step 1/1. It functions in the pathway amino-acid biosynthesis; L-arginine biosynthesis; N(2)-acetyl-L-ornithine from L-glutamate: step 1/4. Functionally, catalyzes two activities which are involved in the cyclic version of arginine biosynthesis: the synthesis of N-acetylglutamate from glutamate and acetyl-CoA as the acetyl donor, and of ornithine by transacetylation between N(2)-acetylornithine and glutamate. The sequence is that of Arginine biosynthesis bifunctional protein ArgJ from Bacillus anthracis.